The sequence spans 511 residues: MDFQLKTLTVARAAAEKSDVLIVLVGSAPLTAKDPLSALIASARKAGDLPDKAGKLLALYHPDEVVASRVVLAAIGDGKPASVRSGVIAAVNAAKAYGPKRVVMAFAQEADGAAVGSAVAAAADASYVYTTTKAKTSNGENGRTIRHLTLGVADAAAVGTAFDEARATVAGIELAKEWGNRPGNYCTPTLLAEAAKELGKLPRVKCEVLGPKEVQKLGMGSFAAVAQGSAEPLRFIVLRYQGGPKDQAPVVLVGKGITFDTGGVSLKPAAEMDEMKFDMCGAASVLGTFRALGEIQPAINVVGLVPSCENMNDGRAIKPGDVVTSMSGQTIEVLNTDAEGRLILCDALTYAKRFEPAAVIDIATLTGACVVALGGVRSGLFTSDDSLAEALQAAGEQSQDRCWRLPLDDEYAEGLKSNFADVANVAGRAGGAITAAKFLQRFAGDFTWAHLDIAGTAWKSGAAKGSTGRPVGLLVSYLMERARSGAAQAVSPKKAARKEPGAAARKARSAQ.

The Mn(2+) site is built by lysine 255 and aspartate 260. Lysine 267 is a catalytic residue. Mn(2+)-binding residues include aspartate 278, aspartate 337, and glutamate 339. Arginine 341 is a catalytic residue. Residues 485-511 (GAAQAVSPKKAARKEPGAAARKARSAQ) form a disordered region.

Belongs to the peptidase M17 family. Mn(2+) serves as cofactor.

It is found in the cytoplasm. It catalyses the reaction Release of an N-terminal amino acid, Xaa-|-Yaa-, in which Xaa is preferably Leu, but may be other amino acids including Pro although not Arg or Lys, and Yaa may be Pro. Amino acid amides and methyl esters are also readily hydrolyzed, but rates on arylamides are exceedingly low.. The catalysed reaction is Release of an N-terminal amino acid, preferentially leucine, but not glutamic or aspartic acids.. Functionally, presumably involved in the processing and regular turnover of intracellular proteins. Catalyzes the removal of unsubstituted N-terminal amino acids from various peptides. The polypeptide is Probable cytosol aminopeptidase (Variovorax paradoxus (strain S110)).